We begin with the raw amino-acid sequence, 212 residues long: Adenylate kinase (212 aa).

10 to 15 serves as a coordination point for ATP; the sequence is GAGKGT. Residues 30-59 form an NMP region; the sequence is STGDMFRAAIANQTEMGVLAKSYIDKGELV. AMP-binding positions include Thr31, Arg36, 57-59, 86-89, and Gln93; these read ELV and GYPR. Residues 127–159 are LID; the sequence is GRIIHRETGETFHKVFNPPADYKEEDYYQREDD. Residues Arg128 and 137-138 each bind ATP; that span reads TF. 2 residues coordinate AMP: Arg156 and Arg167. ATP is bound at residue Gln195.

Belongs to the adenylate kinase family. As to quaternary structure, monomer.

The protein resides in the cytoplasm. It catalyses the reaction AMP + ATP = 2 ADP. Its pathway is purine metabolism; AMP biosynthesis via salvage pathway; AMP from ADP: step 1/1. Its function is as follows. Catalyzes the reversible transfer of the terminal phosphate group between ATP and AMP. Plays an important role in cellular energy homeostasis and in adenine nucleotide metabolism. The polypeptide is Adenylate kinase (Streptococcus sanguinis (strain SK36)).